Consider the following 122-residue polypeptide: Large ribosomal subunit protein bL12 (122 aa).

It belongs to the bacterial ribosomal protein bL12 family. In terms of assembly, homodimer. Part of the ribosomal stalk of the 50S ribosomal subunit. Forms a multimeric L10(L12)X complex, where L10 forms an elongated spine to which 2 to 4 L12 dimers bind in a sequential fashion. Binds GTP-bound translation factors.

Forms part of the ribosomal stalk which helps the ribosome interact with GTP-bound translation factors. Is thus essential for accurate translation. The polypeptide is Large ribosomal subunit protein bL12 (Mesoplasma florum (strain ATCC 33453 / NBRC 100688 / NCTC 11704 / L1) (Acholeplasma florum)).